A 409-amino-acid chain; its full sequence is Aquaporin-10 (409 aa).

Disordered stretches follow at residues 1–24 (MADA…TTMP) and 47–74 (ADVN…RPLV). The span at 12-22 (TTGTATTAPTT) shows a compositional bias: low complexity. 2 consecutive transmembrane segments (helical) span residues 110-130 (FLGS…VVLS) and 138-158 (LSIN…AGGI). The NPA 1 signature appears at 164-166 (NPA). Residues 184-204 (VYMFAQYAGCICASAIVHAIY) traverse the membrane as a helical segment. Residue Asn215 is glycosylated (N-linked (GlcNAc...) asparagine). The next 2 helical transmembrane spans lie at 241–261 (TGLA…LALT) and 270–290 (GGVV…AYGF). Positions 297–299 (NPA) match the NPA 2 motif. The helical transmembrane segment at 339–359 (IPVVGPHLGALLGAAIYFFFI) threads the bilayer.

It belongs to the MIP/aquaporin (TC 1.A.8) family.

The protein localises to the cell membrane. Functionally, aquaglyceroporin that may modulate the water content and osmolytes during anhydrobiosis. This Milnesium tardigradum (Water bear) protein is Aquaporin-10.